The chain runs to 435 residues: MRLLLIFTVIFVFYLAILKRDVNAQQQGIDSEEGDAETFFNRTYSAHQSDLEKRIFRGYDIKKRPVKNASVPTVVDVHWHVIHVSINQKEQTMTLHGHIYMRWYDEYLVWDPKDFAGIHYARVKKWQVWQPKIRVSNSASGLASAFDFSTSAHVIIQMVEKDRAKVEMYPTFSIKVGCMFDFGDFPYDQNKCSVNLFATDTMAEVQLQNLYNIPPTLSFGWEEQKMKRIISDFKILNVSASQFYYGSGNVSKTAPVTGFELGNTWSMLAVNVDFVRHSPYFWSTIVAPTLVCTMFIQVSFFAPTVSLAFVINLMAIYLEFMFLQDITIKIPLYLSKRPSSITLFHILLISNIVSAVFHGVLCALCSTKVPVPLPIRKIYAVKDYVPASWKEEGMVVDYACDTNWTEWTRTARPLAGLAMFVYFVIMFILYLVVRI.

Positions 1–24 (MRLLLIFTVIFVFYLAILKRDVNA) are cleaved as a signal peptide. N-linked (GlcNAc...) asparagine glycosylation is found at N41, N68, N237, and N249. 2 helical membrane passes run 298-318 (VSFFAPTVSLAFVINLMAIYL) and 341-361 (ITLFHILLISNIVSAVFHGVL). An N-linked (GlcNAc...) asparagine glycan is attached at N403. The chain crosses the membrane as a helical span at residues 413 to 433 (PLAGLAMFVYFVIMFILYLVV).

This sequence belongs to the ligand-gated ion channel (TC 1.A.9) family. Acetylcholine receptor (TC 1.A.9.1) subfamily.

The protein localises to the cytoplasmic vesicle membrane. In terms of biological role, thought to regulate endocytosis in coelomocytes through modulation of phospholipase C activity. Possible acetylcholine receptor. This Caenorhabditis briggsae protein is Acetylcholine receptor-like protein cup-4.